The chain runs to 246 residues: Carboxy-S-adenosyl-L-methionine synthase (246 aa).

Residues Tyr-39, 64 to 66 (GCS), 89 to 90 (DN), 121 to 122 (DI), Asn-136, and Arg-203 contribute to the S-adenosyl-L-methionine site.

The protein belongs to the class I-like SAM-binding methyltransferase superfamily. Cx-SAM synthase family. In terms of assembly, homodimer.

It catalyses the reaction prephenate + S-adenosyl-L-methionine = carboxy-S-adenosyl-L-methionine + 3-phenylpyruvate + H2O. In terms of biological role, catalyzes the conversion of S-adenosyl-L-methionine (SAM) to carboxy-S-adenosyl-L-methionine (Cx-SAM). The polypeptide is Carboxy-S-adenosyl-L-methionine synthase (Pseudomonas aeruginosa (strain UCBPP-PA14)).